The following is a 658-amino-acid chain: Alkyldihydroxyacetonephosphate synthase, peroxisomal (658 aa).

2 disordered regions span residues 1 to 41 (MAEA…LRVL) and 63 to 86 (AASA…IPKK). The transit peptide at 1 to 58 (MAEAAAAAGGTGLGAGASYGSAADRDRDPDPDRAGRRLRVLSGHLLGRPREALSTNEC) directs the protein to the peroxisome. The segment covering 23 to 35 (ADRDRDPDPDRAG) has biased composition (basic and acidic residues). The segment covering 63-77 (AASAATAAPTATPAA) has biased composition (low complexity). Serine 65 carries the post-translational modification Phosphoserine. Threonine 74 is modified (phosphothreonine). Lysine 102 is modified (N6-acetyllysine). An FAD-binding PCMH-type domain is found at 202-384 (FERIPDIVLW…TEATIKIRPV (183 aa)). FAD is bound by residues 234–240 (PIGGGTS), 303–309 (DSLEFST), and 316–319 (TRAS). Lysine 347 is subject to N6-acetyllysine. 368–374 (EGTLGVI) provides a ligand contact to FAD. Position 515 (arginine 515) interacts with substrate. Tyrosine 578 serves as the catalytic Proton donor/acceptor. 2 important for enzyme activity regions span residues 615–617 (HHH) and 654–658 (NRNLL).

Belongs to the FAD-binding oxidoreductase/transferase type 4 family. As to quaternary structure, homodimer. FAD serves as cofactor.

Its subcellular location is the peroxisome membrane. The protein resides in the peroxisome. The catalysed reaction is a long chain fatty alcohol + a 1-acylglycerone 3-phosphate = a 1-O-alkylglycerone 3-phosphate + a long-chain fatty acid + H(+). It carries out the reaction hexadecan-1-ol + 1-hexadecanoylglycerone 3-phosphate = 1-O-hexadecylglycerone 3-phosphate + hexadecanoate + H(+). The enzyme catalyses 1-hexadecanoylglycerone 3-phosphate + a long-chain fatty acid = a 1-acylglycerone 3-phosphate + hexadecanoate. It participates in glycerolipid metabolism; ether lipid biosynthesis. In terms of biological role, catalyzes the exchange of the acyl chain in acyl-dihydroxyacetonephosphate (acyl-DHAP) for a long chain fatty alcohol, yielding the first ether linked intermediate, i.e. alkyl-dihydroxyacetonephosphate (alkyl-DHAP), in the pathway of ether lipid biosynthesis. The polypeptide is Alkyldihydroxyacetonephosphate synthase, peroxisomal (AGPS) (Homo sapiens (Human)).